Here is a 436-residue protein sequence, read N- to C-terminus: GTPase Der (436 aa).

EngA-type G domains lie at 4 to 167 and 176 to 351; these read PVVA…KDEE and IKLS…ENHK. Residues 10 to 17, 57 to 61, 119 to 122, 182 to 189, 229 to 233, and 294 to 297 each bind GTP; these read GRPNVGKS, DTGGI, NKVD, DTAGM, and NKWD. One can recognise a KH-like domain in the interval 352 to 436; sequence KRVQSSTLNE…PIRIIPRKRN (85 aa).

Belongs to the TRAFAC class TrmE-Era-EngA-EngB-Septin-like GTPase superfamily. EngA (Der) GTPase family. As to quaternary structure, associates with the 50S ribosomal subunit.

Functionally, GTPase that plays an essential role in the late steps of ribosome biogenesis. This is GTPase Der from Staphylococcus carnosus (strain TM300).